Here is a 571-residue protein sequence, read N- to C-terminus: Probable serine/threonine-protein kinase WNK4 (571 aa).

The Protein kinase domain occupies 19 to 277 (GRFAEILGRG…AKELLQDPFL (259 aa)). Residues 99 to 102 (TELF) and Lys149 contribute to the ATP site. The active-site Proton acceptor is the Asp166. The interval 396–425 (EDDETPHDHHRHRTDSFHSSSSHASSSQAS) is disordered. Positions 412 to 425 (FHSSSSHASSSQAS) are enriched in low complexity. Residue Ser522 is modified to Phosphoserine.

Belongs to the protein kinase superfamily. Ser/Thr protein kinase family. WNK subfamily.

The enzyme catalyses L-seryl-[protein] + ATP = O-phospho-L-seryl-[protein] + ADP + H(+). The catalysed reaction is L-threonyl-[protein] + ATP = O-phospho-L-threonyl-[protein] + ADP + H(+). Its function is as follows. May regulate flowering time by modulating the photoperiod pathway. The polypeptide is Probable serine/threonine-protein kinase WNK4 (WNK4) (Arabidopsis thaliana (Mouse-ear cress)).